Consider the following 150-residue polypeptide: Cytochrome c oxidase subunit 5A, mitochondrial (150 aa).

Residues 1–41 constitute a mitochondrion transit peptide; it reads MLGTALRRCAVAAASRAGSRGLLHPTPVPGPTAAIQSIRCY. Residues 2–17 carry the SIFI-degron motif; sequence LGTALRRCAVAAASRA. Residues lysine 87 and lysine 113 each carry the N6-acetyllysine modification. A Phosphothreonine modification is found at threonine 141.

The protein belongs to the cytochrome c oxidase subunit 5A family. As to quaternary structure, component of the cytochrome c oxidase (complex IV, CIV), a multisubunit enzyme composed of 14 subunits. The complex is composed of a catalytic core of 3 subunits MT-CO1, MT-CO2 and MT-CO3, encoded in the mitochondrial DNA, and 11 supernumerary subunits COX4I, COX5A, COX5B, COX6A, COX6B, COX6C, COX7A, COX7B, COX7C, COX8 and NDUFA4, which are encoded in the nuclear genome. The complex exists as a monomer or a dimer and forms supercomplexes (SCs) in the inner mitochondrial membrane with NADH-ubiquinone oxidoreductase (complex I, CI) and ubiquinol-cytochrome c oxidoreductase (cytochrome b-c1 complex, complex III, CIII), resulting in different assemblies (supercomplex SCI(1)III(2)IV(1) and megacomplex MCI(2)III(2)IV(2)). Interacts with AFG1L. Interacts with RAB5IF. In terms of processing, in response to mitochondrial stress, the precursor protein is ubiquitinated by the SIFI complex in the cytoplasm before mitochondrial import, leading to its degradation. Within the SIFI complex, UBR4 initiates ubiquitin chain that are further elongated or branched by KCMF1.

It localises to the mitochondrion inner membrane. The protein operates within energy metabolism; oxidative phosphorylation. Component of the cytochrome c oxidase, the last enzyme in the mitochondrial electron transport chain which drives oxidative phosphorylation. The respiratory chain contains 3 multisubunit complexes succinate dehydrogenase (complex II, CII), ubiquinol-cytochrome c oxidoreductase (cytochrome b-c1 complex, complex III, CIII) and cytochrome c oxidase (complex IV, CIV), that cooperate to transfer electrons derived from NADH and succinate to molecular oxygen, creating an electrochemical gradient over the inner membrane that drives transmembrane transport and the ATP synthase. Cytochrome c oxidase is the component of the respiratory chain that catalyzes the reduction of oxygen to water. Electrons originating from reduced cytochrome c in the intermembrane space (IMS) are transferred via the dinuclear copper A center (CU(A)) of subunit 2 and heme A of subunit 1 to the active site in subunit 1, a binuclear center (BNC) formed by heme A3 and copper B (CU(B)). The BNC reduces molecular oxygen to 2 water molecules using 4 electrons from cytochrome c in the IMS and 4 protons from the mitochondrial matrix. The sequence is that of Cytochrome c oxidase subunit 5A, mitochondrial (COX5A) from Otolemur crassicaudatus (Brown greater galago).